Here is a 235-residue protein sequence, read N- to C-terminus: Large ribosomal subunit protein uL1 (235 aa).

Belongs to the universal ribosomal protein uL1 family. As to quaternary structure, part of the 50S ribosomal subunit.

Functionally, binds directly to 23S rRNA. The L1 stalk is quite mobile in the ribosome, and is involved in E site tRNA release. Its function is as follows. Protein L1 is also a translational repressor protein, it controls the translation of the L11 operon by binding to its mRNA. This Prochlorococcus marinus (strain MIT 9215) protein is Large ribosomal subunit protein uL1.